Consider the following 418-residue polypeptide: Ciliary microtubule-associated protein 2 (418 aa).

Sperm.

The sequence is that of Ciliary microtubule-associated protein 2 from Homo sapiens (Human).